Reading from the N-terminus, the 368-residue chain is Protein-glutamate methylesterase/protein-glutamine glutaminase (368 aa).

The Response regulatory domain occupies 9 to 126 (KVLVVDDSAF…SINMKELKDE (118 aa)). Position 60 is a 4-aspartylphosphate (aspartate 60). The CheB-type methylesterase domain maps to 161–354 (SVPARIAVAI…ETVVKAVEII (194 aa)). Catalysis depends on residues serine 173, histidine 200, and aspartate 296.

It belongs to the CheB family. Post-translationally, phosphorylated by CheA. Phosphorylation of the N-terminal regulatory domain activates the methylesterase activity.

It localises to the cytoplasm. The catalysed reaction is [protein]-L-glutamate 5-O-methyl ester + H2O = L-glutamyl-[protein] + methanol + H(+). It catalyses the reaction L-glutaminyl-[protein] + H2O = L-glutamyl-[protein] + NH4(+). Its function is as follows. Involved in chemotaxis. Part of a chemotaxis signal transduction system that modulates chemotaxis in response to various stimuli. Catalyzes the demethylation of specific methylglutamate residues introduced into the chemoreceptors (methyl-accepting chemotaxis proteins or MCP) by CheR. Also mediates the irreversible deamidation of specific glutamine residues to glutamic acid. The protein is Protein-glutamate methylesterase/protein-glutamine glutaminase of Pyrococcus horikoshii (strain ATCC 700860 / DSM 12428 / JCM 9974 / NBRC 100139 / OT-3).